A 649-amino-acid polypeptide reads, in one-letter code: Archaeal Lon protease (649 aa).

Residues 1–114 (MFSIKFKTTE…KLDFKAPSST (114 aa)) lie on the Cytoplasmic side of the membrane. 47 to 54 (GDPGVGKS) serves as a coordination point for ATP. A helical membrane pass occupies residues 115–135 (TLLLIMIGAILLSEYLLKYLP). Over 136 to 138 (QNY) the chain is Extracellular. The chain crosses the membrane as a helical span at residues 139–159 (LLAAVTITALIVLIFGFVIIL). Topologically, residues 160-649 (TSIMGASRAS…DNRGGAERFN (490 aa)) are cytoplasmic. Residues 456 to 639 (EPKVGVIYGL…DEIVPLVFDL (184 aa)) form the Lon proteolytic domain. Active-site residues include Ser-550 and Lys-593.

Belongs to the peptidase S16 family. Archaeal LonB subfamily. Homohexamer. Organized in a ring with a central cavity.

Its subcellular location is the cell membrane. Its function is as follows. ATP-dependent serine protease that mediates the selective degradation of mutant and abnormal proteins as well as certain short-lived regulatory proteins. Degrades polypeptides processively. This is Archaeal Lon protease from Methanocaldococcus jannaschii (strain ATCC 43067 / DSM 2661 / JAL-1 / JCM 10045 / NBRC 100440) (Methanococcus jannaschii).